The primary structure comprises 304 residues: Ribonuclease BN (304 aa).

Histidine 63, histidine 65, aspartate 67, histidine 68, histidine 140, aspartate 211, and histidine 269 together coordinate Zn(2+). Aspartate 67 serves as the catalytic Proton acceptor.

It belongs to the RNase Z family. RNase BN subfamily. Homodimer. Zn(2+) is required as a cofactor.

In terms of biological role, zinc phosphodiesterase, which has both exoribonuclease and endoribonuclease activities. In Erwinia tasmaniensis (strain DSM 17950 / CFBP 7177 / CIP 109463 / NCPPB 4357 / Et1/99), this protein is Ribonuclease BN.